We begin with the raw amino-acid sequence, 321 residues long: Probable cell division protein WhiA (321 aa).

Residues 275-308 (SLDELGRLADPPMTKDAVAGRIRRLLAMADKRAA) constitute a DNA-binding region (H-T-H motif).

This sequence belongs to the WhiA family.

Functionally, involved in cell division and chromosome segregation. This chain is Probable cell division protein WhiA, found in Micrococcus luteus (strain ATCC 4698 / DSM 20030 / JCM 1464 / CCM 169 / CCUG 5858 / IAM 1056 / NBRC 3333 / NCIMB 9278 / NCTC 2665 / VKM Ac-2230) (Micrococcus lysodeikticus).